The chain runs to 177 residues: Parathyroid hormone-related protein (177 aa).

A signal peptide spans 1 to 24 (MQRRLVQQWSVAVFLLSYAVPSCG). The propeptide occupies 25–34 (RSVEGLSRRL). The tract at residues 57-68 (RFFLHHLIAEIH) is important for receptor binding. The tract at residues 74 to 177 (ATSEVSPNSK…TSLELDSRRH (104 aa)) is disordered. Positions 76 to 90 (SEVSPNSKPSPNTKN) are enriched in polar residues. Positions 108 to 129 (TNKVETYKEQPLKTPGKKKKGK) match the Nuclear localization signal motif. A compositionally biased stretch (basic and acidic residues) spans 109–118 (NKVETYKEQP). A compositionally biased stretch (basic residues) spans 122–132 (PGKKKKGKPGK).

Belongs to the parathyroid hormone family. Interacts with PTH1R (via N-terminal extracellular domain). There are 3 principal secretory forms, called PTHrP[1-36], PTHrP[38-94], and osteostatin (PTHrP[107-139]) arising from endoproteolytic cleavage of the initial translation product. Each of these secretory forms is believed to have one or more of its own receptors that mediates the normal paracrine, autocrine and endocrine actions. As to expression, ubiquitous. Also expressed in the mammary gland.

It is found in the secreted. It localises to the cytoplasm. Its subcellular location is the nucleus. Its function is as follows. Neuroendocrine peptide which is a critical regulator of cellular and organ growth, development, migration, differentiation and survival and of epithelial calcium ion transport. Acts by binding to its receptor, PTH1R, activating G protein-coupled receptor signaling. Regulates endochondral bone development and epithelial-mesenchymal interactions during the formation of the mammary glands and teeth. Required for skeletal homeostasis. Promotes mammary mesenchyme differentiation and bud outgrowth by modulating mesenchymal cell responsiveness to BMPs. Up-regulates BMPR1A expression in the mammary mesenchyme and this increases the sensitivity of these cells to BMPs and allows them to respond to BMP4 in a paracrine and/or autocrine fashion. BMP4 signaling in the mesenchyme, in turn, triggers epithelial outgrowth and augments MSX2 expression, which causes the mammary mesenchyme to inhibit hair follicle formation within the nipple sheath. Promotes colon cancer cell migration and invasion in an integrin alpha-6/beta-1-dependent manner through activation of Rac1. Functionally, potent inhibitor of osteoclastic bone resorption. This is Parathyroid hormone-related protein from Homo sapiens (Human).